A 75-amino-acid chain; its full sequence is Large ribosomal subunit protein bL31 (75 aa).

Belongs to the bacterial ribosomal protein bL31 family. Type A subfamily. As to quaternary structure, part of the 50S ribosomal subunit.

Functionally, binds the 23S rRNA. The protein is Large ribosomal subunit protein bL31 of Gluconobacter oxydans (strain 621H) (Gluconobacter suboxydans).